The primary structure comprises 401 residues: L-rhamnonate dehydratase (401 aa).

Residues histidine 29 and arginine 55 each coordinate substrate. Mg(2+) is bound by residues aspartate 222, glutamate 248, and glutamate 276. Histidine 325 (proton acceptor) is an active-site residue. Glutamate 345 provides a ligand contact to substrate.

It belongs to the mandelate racemase/muconate lactonizing enzyme family. RhamD subfamily. As to quaternary structure, homooctamer; tetramer of dimers. It depends on Mg(2+) as a cofactor.

The enzyme catalyses L-rhamnonate = 2-dehydro-3-deoxy-L-rhamnonate + H2O. Functionally, catalyzes the dehydration of L-rhamnonate to 2-keto-3-deoxy-L-rhamnonate (KDR). The polypeptide is L-rhamnonate dehydratase (Tolumonas auensis (strain DSM 9187 / NBRC 110442 / TA 4)).